A 548-amino-acid polypeptide reads, in one-letter code: Glucose-6-phosphate isomerase (548 aa).

Glutamate 359 acts as the Proton donor in catalysis. Catalysis depends on residues histidine 390 and lysine 510.

Belongs to the GPI family.

The protein localises to the cytoplasm. It carries out the reaction alpha-D-glucose 6-phosphate = beta-D-fructose 6-phosphate. It participates in carbohydrate biosynthesis; gluconeogenesis. The protein operates within carbohydrate degradation; glycolysis; D-glyceraldehyde 3-phosphate and glycerone phosphate from D-glucose: step 2/4. In terms of biological role, catalyzes the reversible isomerization of glucose-6-phosphate to fructose-6-phosphate. In Gloeobacter violaceus (strain ATCC 29082 / PCC 7421), this protein is Glucose-6-phosphate isomerase.